Consider the following 238-residue polypeptide: Hydatid disease diagnostic antigen P-29 (238 aa).

In terms of domain architecture, BAR spans 18 to 238 (GELVNKNEKT…AKECSMMLGE (221 aa)).

This is Hydatid disease diagnostic antigen P-29 from Echinococcus granulosus (Hydatid tapeworm).